We begin with the raw amino-acid sequence, 89 residues long: Large ribosomal subunit protein bL27 (89 aa).

The tract at residues 1 to 21 (MAHKKAGGSSRNGRDSESKRL) is disordered.

This sequence belongs to the bacterial ribosomal protein bL27 family.

This is Large ribosomal subunit protein bL27 from Brucella anthropi (strain ATCC 49188 / DSM 6882 / CCUG 24695 / JCM 21032 / LMG 3331 / NBRC 15819 / NCTC 12168 / Alc 37) (Ochrobactrum anthropi).